The primary structure comprises 58 residues: MKKNRHSRDMQNHKKPMNKKVLEEEFSSELGDYNAGKIIETLEVTKPEKKKEKNKKQQ.

Disordered stretches follow at residues 1–20 (MKKN…MNKK) and 38–58 (IIET…KKQQ).

This is an uncharacterized protein from Bacillus subtilis (strain 168).